Reading from the N-terminus, the 601-residue chain is FAD-binding monooxygenase stcW (601 aa).

FAD-binding positions include 42 to 43 (FS), Glu-64, Trp-73, Asp-84, Tyr-90, and Val-133.

Belongs to the FAD-binding monooxygenase family. FAD is required as a cofactor.

It functions in the pathway mycotoxin biosynthesis; sterigmatocystin biosynthesis. Its function is as follows. FAD-binding monooxygenase; part of the gene cluster that mediates the biosynthesis of sterigmatocystin (ST), a polyketide-derived furanocoumarin which is part of the most toxic and carcinogenic compounds among the known mycotoxins. The first step in the biosynthesis of sterigmatocystin is the production of hexanoate by the fatty acid synthase (FAS) units stcJ and stcK. The polyketide backbone is assembled by the non-reducing polyketide synthase stcA by condensation of the starter hexanoyl-CoA and 7 malonyl-CoA extender units followed by cyclization and release of norsolorinic acid. Norsolorinic acid is the first stable intermediate in the biosynthesis of sterigmatocystin and is converted into averantin (AVN) by the ketoreductase stcE which reduces the hexanoate ketone to an alcohol. Averantin is then oxidized into 5'-hydroxyaverantin (HAVN) by the cytochrome P450 monooxygenase stcF. 5'-hydroxyaverantin is further converted to 5'-oxyaverantin (OAVN) by the 5'-hydroxyaverantin dehydrogenase stcG. The next step is the conversion of OAVN into averufin (AVF) which is catalyzed by a yet to be identified enzyme. The cytochrome P450 monooxygenase stcB and the flavin-binding monooxygenase stcW are both required for the conversion of averufin to 1-hydroxyversicolorone. The esterase stcI probably catalyzes the formation of versiconal hemiacetal acetate from 1-hydroxyversicolorone. The oxydoreductase stcN then probably catalyzes the biosynthetic step from versiconal to versicolorin B (VERB). The next step is performed by the versicolorin B desaturase stcL to produce versicolorin A (VERA). The ketoreductase stcU and the cytochrome P450 monooxygenase stcS are involved in the conversion of versicolorin A to demethylsterigmatocystin. The Baeyer-Villiger oxidas stcQ and the reductase stcR might be involved in the biosynthetic step from versicolorin A to demethylsterigmatocystin. The final step in the biosynthesis of sterigmatocystin is the methylation of demethylsterigmatocystin catalyzed by the methyltransferase stcP. This Emericella nidulans (strain FGSC A4 / ATCC 38163 / CBS 112.46 / NRRL 194 / M139) (Aspergillus nidulans) protein is FAD-binding monooxygenase stcW.